A 324-amino-acid polypeptide reads, in one-letter code: Holliday junction branch migration complex subunit RuvB (324 aa).

The tract at residues 1-168 (MEDLALRPKT…FGIVEHLEYY (168 aa)) is large ATPase domain (RuvB-L). ATP-binding positions include leucine 6, arginine 7, glycine 48, lysine 51, threonine 52, threonine 53, 115 to 117 (EDF), arginine 158, tyrosine 168, and arginine 205. A Mg(2+)-binding site is contributed by threonine 52. The tract at residues 169–239 (TPEELAQGVM…RALEALAALG (71 aa)) is small ATPAse domain (RuvB-S). A head domain (RuvB-H) region spans residues 242 to 324 (ELGLEKRDRE…PPPVGPLLEP (83 aa)). Residues arginine 297 and arginine 302 each coordinate DNA.

Belongs to the RuvB family. Homohexamer. Forms an RuvA(8)-RuvB(12)-Holliday junction (HJ) complex. HJ DNA is sandwiched between 2 RuvA tetramers; dsDNA enters through RuvA and exits via RuvB. An RuvB hexamer assembles on each DNA strand where it exits the tetramer. Each RuvB hexamer is contacted by two RuvA subunits (via domain III) on 2 adjacent RuvB subunits; this complex drives branch migration. In the full resolvosome a probable DNA-RuvA(4)-RuvB(12)-RuvC(2) complex forms which resolves the HJ.

It is found in the cytoplasm. The enzyme catalyses ATP + H2O = ADP + phosphate + H(+). Its activity is regulated as follows. The ATPase activity of RuvB is enhanced by RuvA. The RuvA-RuvB-RuvC complex processes Holliday junction (HJ) DNA during genetic recombination and DNA repair, while the RuvA-RuvB complex plays an important role in the rescue of blocked DNA replication forks via replication fork reversal (RFR). RuvA specifically binds to HJ cruciform DNA, conferring on it an open structure. The RuvB hexamer acts as an ATP-dependent pump, pulling dsDNA into and through the RuvAB complex. RuvB forms 2 homohexamers on either side of HJ DNA bound by 1 or 2 RuvA tetramers; 4 subunits per hexamer contact DNA at a time. Coordinated motions by a converter formed by DNA-disengaged RuvB subunits stimulates ATP hydrolysis and nucleotide exchange. Immobilization of the converter enables RuvB to convert the ATP-contained energy into a lever motion, pulling 2 nucleotides of DNA out of the RuvA tetramer per ATP hydrolyzed, thus driving DNA branch migration. The RuvB motors rotate together with the DNA substrate, which together with the progressing nucleotide cycle form the mechanistic basis for DNA recombination by continuous HJ branch migration. Branch migration allows RuvC to scan DNA until it finds its consensus sequence, where it cleaves and resolves cruciform DNA. Functionally, has Mg(2+)-, DNA-dependent ATPase activity; dsDNA and supercoiled DNA but not ssDNA stimulate activity. Binds to linear dsDNA in the absence of ATP or ATP-gamma-S. This subunit can promote Holliday junction migration alone in vitro. Partially complements an E.coli deletion for UV sensitivity. The sequence is that of Holliday junction branch migration complex subunit RuvB from Thermus thermophilus.